The sequence spans 82 residues: Cytochrome c-551 (82 aa).

4 residues coordinate heme c: cysteine 12, cysteine 15, histidine 16, and methionine 61.

Binds 1 heme c group covalently per subunit.

The polypeptide is Cytochrome c-551 (Azotobacter vinelandii).